The sequence spans 671 residues: Amidase chry2 (671 aa).

Cysteine 2 acts as the Nucleophile in catalysis. A Glutamine amidotransferase type-2 domain is found at 2–220 (CGISAFITHP…PGHYLICRPN (219 aa)). Residues 251–639 (VRERLLEAVR…TQDAMDGAFN (389 aa)) form the Asparagine synthetase domain.

Belongs to the asparagine synthetase family.

The protein operates within pigment biosynthesis. Amidase; part of the gene cluster that mediates the biosynthesis of the yellow pigment chrysogine. Pyruvic acid and anthranilic acid are likely substrates for the nonribosomal peptide synthetase chry1/NRPS14, with pyruvic acid adenylated by the first A domain and anthranilic acid by the second. If pyruvic acid and anthranilic acid are merged and released from chry1/NRPS14 by hydrolysis, a subsequent amidation would lead to 2-pyruvoylaminobenzamide. This process is probably catalyzed by the amidotransferase chry2 using glutamine as amino donor. The dehydrogenase chry5 that has a terminal berberine bridge domain for C-N cyclization could catalyze the cyclization of 2-pyruvoylaminobenzamide to yield acetyl-4(3H)-quinazolidinone. A final reduction of acetyl-4(3H)-quinazolidinone catalyzed by the oxidoreductase chry4 would result in chrysogine. This is Amidase chry2 from Gibberella zeae (strain ATCC MYA-4620 / CBS 123657 / FGSC 9075 / NRRL 31084 / PH-1) (Wheat head blight fungus).